Here is an 86-residue protein sequence, read N- to C-terminus: Mu-theraphotoxin-Cg2a 3 (86 aa).

The first 21 residues, 1-21 (MKVSVVITLAVLGVMFVWASA), serve as a signal peptide directing secretion. Residues 22 to 50 (AELKERGSDQRDSPAWIKSMERIFQSEER) constitute a propeptide that is removed on maturation. 3 disulfide bridges follow: cysteine 52-cysteine 66, cysteine 59-cysteine 71, and cysteine 65-cysteine 78. Phenylalanine 84 bears the Phenylalanine amide mark.

The protein belongs to the neurotoxin 10 (Hwtx-1) family. 37 (Jztx-31) subfamily. As to expression, expressed by the venom gland.

Its subcellular location is the secreted. Inhibits both peak current and fast inactivation of voltage-gated sodium channels (Nav) channels. Inhibits the inactivation of Nav on DRG neurons (EC(50)=1.77 uM) and peak current of cardiac myocytes (IC(50)=0.90 uM). This Chilobrachys guangxiensis (Chinese earth tiger tarantula) protein is Mu-theraphotoxin-Cg2a 3.